The following is a 157-amino-acid chain: Protein EOLA1 (157 aa).

An ASCH domain is found at 6–92 (LSFRQPYAGL…IAGLIDIGET (87 aa)).

This sequence belongs to the EOLA family. Interacts with MT2A.

May play a role in cell protection during the inflammatory response. In epithelial cells, negatively regulates IL6 production and apoptosis through the regulation of MT2A expression. The chain is Protein EOLA1 from Mus musculus (Mouse).